Here is a 1242-residue protein sequence, read N- to C-terminus: Membrane-associated phosphatidylinositol transfer protein 1 (1242 aa).

3 positions are modified to phosphothreonine: Thr-59, Thr-282, and Thr-287. The segment at 259-330 is disordered; sequence CNTGSEGPEA…HGGGVSPQSL (72 aa). Residues 272 to 282 are compositionally biased toward polar residues; that stretch reads GKPSTETQPGT. Positions 299–319 are enriched in low complexity; it reads ASPDASFGKQWSSSSRSSYSS. Ser-300, Ser-304, Ser-319, Ser-326, Ser-329, Ser-342, Ser-345, Ser-346, and Ser-373 each carry phosphoserine. Ser-382 carries the phosphoserine; by CDK1 modification. Residues 581–593 show a composition bias toward low complexity; that stretch reads AGTGSRGSSRRGS. Residues 581–678 are disordered; the sequence is AGTGSRGSSR…PASSEAPDGP (98 aa). Phosphoserine occurs at positions 593, 600, and 621. Positions 643–656 are enriched in polar residues; the sequence is GSQNSLQVAPTVTS. The 195-residue stretch at 684 to 878 folds into the DDHD domain; sequence LDFKVSGFFL…VAFILRQVIE (195 aa). The residue at position 894 (Ser-894) is a Phosphoserine. Positions 1207–1242 are disordered; sequence RSRGPSQVDLEGPGTPPTTLARGKTRSISLKLDSEE. Arg-1209 bears the Omega-N-methylarginine mark. Ser-1235 carries the phosphoserine modification.

It belongs to the PtdIns transfer protein family. PI transfer class IIA subfamily. In terms of assembly, interacts with PIK4CA and VAPB. Interacts with PTK2B via its C-terminus. Interacts with RHOA. Has higher affinity for the inactive, GDP-bound form of RHOA. The CDK1-phosphorylated form interacts with PLK1. Post-translationally, phosphorylated on multiple sites by CDK1 at the onset of mitosis. Phosphorylation facilitates dissociation from the Golgi complex and is required for interaction with PLK1. In terms of processing, phosphorylated on threonine residues upon treatment with oleic acid. Phosphorylated on tyrosine residues by PTK2B.

It localises to the cytoplasm. The protein resides in the golgi apparatus. The protein localises to the golgi stack membrane. Its subcellular location is the endoplasmic reticulum membrane. It is found in the lipid droplet. It localises to the cleavage furrow. The protein resides in the midbody. The enzyme catalyses a 1,2-diacyl-sn-glycero-3-phospho-(1D-myo-inositol)(in) = a 1,2-diacyl-sn-glycero-3-phospho-(1D-myo-inositol)(out). In terms of biological role, catalyzes the transfer of phosphatidylinositol (PI) between membranes. Binds PI, phosphatidylcholine (PC) and phosphatidic acid (PA) with the binding affinity order of PI &gt; PA &gt; PC. Regulates RHOA activity, and plays a role in cytoskeleton remodeling. Necessary for normal completion of cytokinesis. Plays a role in maintaining normal diacylglycerol levels in the Golgi apparatus. Necessary for maintaining the normal structure of the endoplasmic reticulum and the Golgi apparatus. Required for protein export from the endoplasmic reticulum and the Golgi. Binds calcium ions. In Rattus norvegicus (Rat), this protein is Membrane-associated phosphatidylinositol transfer protein 1 (Pitpnm1).